A 318-amino-acid chain; its full sequence is tRNA dimethylallyltransferase (318 aa).

Gly16–Ser23 contributes to the ATP binding site. Thr18–Ser23 lines the substrate pocket. Interaction with substrate tRNA regions lie at residues Asp41 to Gln44 and Gln165 to Arg169.

It belongs to the IPP transferase family. Monomer. Mg(2+) is required as a cofactor.

It catalyses the reaction adenosine(37) in tRNA + dimethylallyl diphosphate = N(6)-dimethylallyladenosine(37) in tRNA + diphosphate. In terms of biological role, catalyzes the transfer of a dimethylallyl group onto the adenine at position 37 in tRNAs that read codons beginning with uridine, leading to the formation of N6-(dimethylallyl)adenosine (i(6)A). The protein is tRNA dimethylallyltransferase of Pelodictyon phaeoclathratiforme (strain DSM 5477 / BU-1).